Here is a 333-residue protein sequence, read N- to C-terminus: Testin-2 (333 aa).

Positions 1 to 17 (MIAVLFLAILCLEVDST) are cleaved as a signal peptide. Disulfide bonds link cysteine 135-cysteine 178, cysteine 169-cysteine 211, and cysteine 269-cysteine 322. Asparagine 173 carries an N-linked (GlcNAc...) asparagine glycan. Active-site residues include histidine 276 and asparagine 300.

The protein belongs to the peptidase C1 family. In terms of tissue distribution, sertoli cells.

Its subcellular location is the secreted. The chain is Testin-2 (Testin) from Rattus norvegicus (Rat).